Reading from the N-terminus, the 916-residue chain is Protein translocase subunit SecA (916 aa).

ATP contacts are provided by residues Gln87, 105-109 (GEGKT), and Asp507. Residues Cys900, Cys902, Cys911, and His912 each coordinate Zn(2+).

It belongs to the SecA family. In terms of assembly, monomer and homodimer. Part of the essential Sec protein translocation apparatus which comprises SecA, SecYEG and auxiliary proteins SecDF-YajC and YidC. Zn(2+) serves as cofactor.

The protein localises to the cell inner membrane. The protein resides in the cytoplasm. It carries out the reaction ATP + H2O + cellular proteinSide 1 = ADP + phosphate + cellular proteinSide 2.. In terms of biological role, part of the Sec protein translocase complex. Interacts with the SecYEG preprotein conducting channel. Has a central role in coupling the hydrolysis of ATP to the transfer of proteins into and across the cell membrane, serving both as a receptor for the preprotein-SecB complex and as an ATP-driven molecular motor driving the stepwise translocation of polypeptide chains across the membrane. The polypeptide is Protein translocase subunit SecA (Neisseria meningitidis serogroup B (strain ATCC BAA-335 / MC58)).